We begin with the raw amino-acid sequence, 431 residues long: Histidinol dehydrogenase (431 aa).

Residues Y127, Q190, and N213 each contribute to the NAD(+) site. Substrate-binding residues include S238, Q260, and H263. Zn(2+) contacts are provided by Q260 and H263. Active-site proton acceptor residues include E329 and H330. 4 residues coordinate substrate: H330, D363, E417, and H422. Residue D363 participates in Zn(2+) binding. Residue H422 participates in Zn(2+) binding.

The protein belongs to the histidinol dehydrogenase family. Zn(2+) serves as cofactor.

The enzyme catalyses L-histidinol + 2 NAD(+) + H2O = L-histidine + 2 NADH + 3 H(+). The protein operates within amino-acid biosynthesis; L-histidine biosynthesis; L-histidine from 5-phospho-alpha-D-ribose 1-diphosphate: step 9/9. In terms of biological role, catalyzes the sequential NAD-dependent oxidations of L-histidinol to L-histidinaldehyde and then to L-histidine. The polypeptide is Histidinol dehydrogenase (Methanopyrus kandleri (strain AV19 / DSM 6324 / JCM 9639 / NBRC 100938)).